The following is a 459-amino-acid chain: Putrescine aminotransferase (459 aa).

Pyridoxal 5'-phosphate contacts are provided by residues 150–151 (GT) and glutamine 274. At lysine 300 the chain carries N6-(pyridoxal phosphate)lysine. Threonine 332 is a pyridoxal 5'-phosphate binding site.

The protein belongs to the class-III pyridoxal-phosphate-dependent aminotransferase family. Putrescine aminotransferase subfamily. Pyridoxal 5'-phosphate is required as a cofactor.

The enzyme catalyses an alkane-alpha,omega-diamine + 2-oxoglutarate = an omega-aminoaldehyde + L-glutamate. It catalyses the reaction putrescine + 2-oxoglutarate = 1-pyrroline + L-glutamate + H2O. The catalysed reaction is cadaverine + 2-oxoglutarate = 5-aminopentanal + L-glutamate. It participates in amine and polyamine degradation; putrescine degradation; 4-aminobutanal from putrescine (transaminase route): step 1/1. Functionally, catalyzes the aminotransferase reaction from putrescine to 2-oxoglutarate, leading to glutamate and 4-aminobutanal, which spontaneously cyclizes to form 1-pyrroline. This is the first step in one of two pathways for putrescine degradation, where putrescine is converted into 4-aminobutanoate (gamma-aminobutyrate or GABA) via 4-aminobutanal. Also functions as a cadaverine transaminase in a a L-lysine degradation pathway to succinate that proceeds via cadaverine, glutarate and L-2-hydroxyglutarate. This is Putrescine aminotransferase from Escherichia coli O7:K1 (strain IAI39 / ExPEC).